The primary structure comprises 262 residues: tRNA pseudouridine synthase A (262 aa).

The Nucleophile role is filled by D51. Y109 provides a ligand contact to substrate.

The protein belongs to the tRNA pseudouridine synthase TruA family. Homodimer.

The enzyme catalyses uridine(38/39/40) in tRNA = pseudouridine(38/39/40) in tRNA. Its function is as follows. Formation of pseudouridine at positions 38, 39 and 40 in the anticodon stem and loop of transfer RNAs. In Legionella pneumophila (strain Lens), this protein is tRNA pseudouridine synthase A.